Here is a 544-residue protein sequence, read N- to C-terminus: Neurofilament light polypeptide (544 aa).

The residue at position 2 (S2) is an N-acetylserine. The segment at 2–87 is head; the sequence is SSYSYDPYYT…KIVRTQEKVQ (86 aa). Residues 84-394 enclose the IF rod domain; the sequence is EKVQLQDLND…KLLEGEETRL (311 aa). The tract at residues 88–119 is coil 1A; the sequence is LQDLNDRFANFIERVHELEQRNKVLEAELLLL. A linker 1 region spans residues 120–132; that stretch reads RQKHNEPSRLRDM. The coil 1B stretch occupies residues 133–228; that stretch reads YEKEVRDVRL…KVHEEELSQL (96 aa). The linker 12 stretch occupies residues 229-246; that stretch reads QSQVQYAQVSLEVEVAKP. A coil 2A region spans residues 247–265; that stretch reads DLSSALRDIRGQYEKLAAK. Positions 266 to 274 are linker 2; it reads NMQSAEEWF. Positions 275–390 are coil 2B; that stretch reads KSRFTVLTQS…AAYRKLLEGE (116 aa). The segment at 391 to 435 is tail, subdomain A; the sequence is ETRLSFSGVGAITSGYTQSAPVFGRSAYSLQSSSYMTSRAFPTYY. The interval 391–544 is tail; that stretch reads ETRLSFSGVG…EESEKKEKKK (154 aa). The tail, subdomain B (acidic) stretch occupies residues 436 to 544; that stretch reads SSHVQEEQLD…EESEKKEKKK (109 aa). The interval 450–544 is disordered; that stretch reads IESSRAEEAK…EESEKKEKKK (95 aa). Basic and acidic residues predominate over residues 451–462; the sequence is ESSRAEEAKAEA. The span at 463–525 shows a compositional bias: acidic residues; that stretch reads PEEEEEEAAE…EAEGDGEEEG (63 aa). Over residues 526–544 the composition is skewed to basic and acidic residues; sequence ESKGDEAAEEESEKKEKKK.

It belongs to the intermediate filament family. Forms homodimers (in vitro).

The protein localises to the cell projection. It is found in the axon. It localises to the cytoplasm. Its subcellular location is the cytoskeleton. Its function is as follows. Neurofilaments usually contain three intermediate filament proteins: NEFL, NEFM, and NEFH which are involved in the maintenance of neuronal caliber. May additionally cooperate with other neuronal intermediate filament proteins to form neuronal filamentous networks. The protein is Neurofilament light polypeptide (nefl) of Xenopus laevis (African clawed frog).